A 774-amino-acid chain; its full sequence is Ion-translocating oxidoreductase complex subunit C (774 aa).

2 4Fe-4S ferredoxin-type domains span residues 368 to 398 (ELTS…QQLQ) and 408 to 437 (KCEE…VQYY). [4Fe-4S] cluster-binding residues include Cys378, Cys381, Cys384, Cys388, Cys417, Cys420, Cys423, and Cys427. The span at 459 to 490 (ARFEEKKARMERDKAERENRFKQAAEDRRKEM) shows a compositional bias: basic and acidic residues. Disordered stretches follow at residues 459 to 496 (ARFE…QGGS) and 533 to 774 (AKQA…EEKD). Over residues 533-545 (AKQAEAAQSGASE) the composition is skewed to low complexity. Residues 550 to 572 (EMAKLREERKRQARERKAQKGEV) are compositionally biased toward basic and acidic residues. Residues 605 to 618 (TESAAQPAQATPSS) are compositionally biased toward low complexity. Polar residues-rich tracts occupy residues 645–658 (TEST…TPSS), 686–698 (ESAA…TPSS), 725–738 (TESA…TPSS), and 762–774 (QQSS…EEKD).

It belongs to the 4Fe4S bacterial-type ferredoxin family. RnfC subfamily. The complex is composed of six subunits: RnfA, RnfB, RnfC, RnfD, RnfE and RnfG. The cofactor is [4Fe-4S] cluster.

It localises to the cell inner membrane. Functionally, part of a membrane-bound complex that couples electron transfer with translocation of ions across the membrane. This chain is Ion-translocating oxidoreductase complex subunit C, found in Vibrio cholerae serotype O1 (strain ATCC 39315 / El Tor Inaba N16961).